A 290-amino-acid chain; its full sequence is Pyridoxal kinase PdxY (290 aa).

Substrate-binding positions include serine 12 and threonine 47–glutamine 48. Residues aspartate 114, glutamate 151, lysine 184, and arginine 211 to leucine 214 each bind ATP. A substrate-binding site is contributed by aspartate 225.

The protein belongs to the pyridoxine kinase family. PdxY subfamily. Homodimer. It depends on Mg(2+) as a cofactor.

It carries out the reaction pyridoxal + ATP = pyridoxal 5'-phosphate + ADP + H(+). It participates in cofactor metabolism; pyridoxal 5'-phosphate salvage; pyridoxal 5'-phosphate from pyridoxal: step 1/1. Its function is as follows. Pyridoxal kinase involved in the salvage pathway of pyridoxal 5'-phosphate (PLP). Catalyzes the phosphorylation of pyridoxal to PLP. The sequence is that of Pyridoxal kinase PdxY from Pseudomonas putida (strain GB-1).